A 231-amino-acid chain; its full sequence is 2,3,4,5-tetrahydropyridine-2,6-dicarboxylate N-acetyltransferase (231 aa).

It belongs to the transferase hexapeptide repeat family. DapH subfamily.

It carries out the reaction (S)-2,3,4,5-tetrahydrodipicolinate + acetyl-CoA + H2O = L-2-acetamido-6-oxoheptanedioate + CoA. The protein operates within amino-acid biosynthesis; L-lysine biosynthesis via DAP pathway; LL-2,6-diaminopimelate from (S)-tetrahydrodipicolinate (acetylase route): step 1/3. Functionally, catalyzes the transfer of an acetyl group from acetyl-CoA to tetrahydrodipicolinate. In Thermosipho melanesiensis (strain DSM 12029 / CIP 104789 / BI429), this protein is 2,3,4,5-tetrahydropyridine-2,6-dicarboxylate N-acetyltransferase.